The sequence spans 231 residues: Cell cycle transcriptional regulator CtrA (231 aa).

Residues 2 to 116 enclose the Response regulatory domain; that stretch reads RVLLIEDDSA…EMIARIHAVV (115 aa). A 4-aspartylphosphate modification is found at Asp51. The segment at residues 124–223 is a DNA-binding region (ompR/PhoB-type); it reads QSVIKTGDIV…VWGRGYVLRD (100 aa).

Post-translationally, phosphorylated by CckA.

Functionally, forms part of a two-component regulatory system CtrA/CckA that controls multiple events in the cell cycle, including cell division, stalk synthesis and cell cycle-specific transcription. Binds to a group of cell cycle-regulated promoters critical for DNA replication, DNA methylation, and class II flagellar biogenesis. This is Cell cycle transcriptional regulator CtrA (ctrA) from Caulobacter vibrioides (strain ATCC 19089 / CIP 103742 / CB 15) (Caulobacter crescentus).